The following is a 729-amino-acid chain: MDAFKLLTRSTKFKAGNSLSSTLPSKGKAENPQLFRDAEAEKLLESNAFGKKRKRTQAAGDSDAEDGNAGDLDFFGSGKRSAASAPSKKDEDGPSEQKDASDSEGDDSMDEVERRTILNSHKIKVTDMRDFEELQPTQPQKEESKKKKKKRKQQEEEPAQTLTKKEQKKARRLFPEPLVSFKQLRTKYNISRRLAENIAEQGFTVPTEVQLGSLPLLLGDQSVPQKSGTEKSTEPDLLVVAPTGSGKTLSFMIPVINKIVRHHHEKPEERGILSVVIAPTKELASQIVNEGRKLALGTGVKITLMKKGMRVVERDDEDDSKDVLDEDDSESLGSEDDEKATAKNSKGKAPVTKSDILVTTPLLLVNALSANRTKPLATLPLVRNVVLDEADVLLDPLFRDQTLDIWRSCTHPELRASLWSATMGSNVEDLAKSTIKERKDTLSETKSYPLLRLVVGLKDSAIPNIKHKLVYAATEQGKLLGLRQLLHPAAASSTDIRLRPPFLIFTQTIPRAVALHSELRYDIPPEAGGSSRIAVLHSELSDGQRSEIMKQFRKGEIWILVTTDLLARGVDFRGINGVVNYDIPNSAAVYVHRVGRTGRAGREGGIAVTYYTKEDIPYVKSIANVIDVSEKLRGTDEEKSVQKWLLDALPDLSKKKKEELKKHGVKARQTQGTKDDKKTRISTKSGYERRQENKKKALISASRNRKSQPKSGADSGSDDDNQGWQGLED.

Disordered regions lie at residues 15–34 (AGNS…NPQL) and 45–171 (ESNA…KKAR). The span at 87 to 101 (SKKDEDGPSEQKDAS) shows a compositional bias: basic and acidic residues. Positions 183 to 211 (QLRTKYNISRRLAENIAEQGFTVPTEVQL) match the Q motif motif. The Helicase ATP-binding domain occupies 228-441 (GTEKSTEPDL…KSTIKERKDT (214 aa)). 241–248 (APTGSGKT) contributes to the ATP binding site. The disordered stretch occupies residues 313–350 (ERDDEDDSKDVLDEDDSESLGSEDDEKATAKNSKGKAP). Positions 314-338 (RDDEDDSKDVLDEDDSESLGSEDDE) are enriched in acidic residues. A DEAD box motif is present at residues 388–391 (DEAD). A Helicase C-terminal domain is found at 481–649 (GLRQLLHPAA…SVQKWLLDAL (169 aa)). Positions 657–729 (KEELKKHGVK…DNQGWQGLED (73 aa)) are disordered. Basic and acidic residues predominate over residues 686–695 (GYERRQENKK). A compositionally biased stretch (basic residues) spans 696–708 (KALISASRNRKSQ). A compositionally biased stretch (acidic residues) spans 716–729 (GSDDDNQGWQGLED).

The protein belongs to the DEAD box helicase family. DDX52/ROK1 subfamily. In terms of assembly, interacts with the U3 snoRNA and is associated with the 90S and 40S pre-ribosomes.

The protein localises to the nucleus. Its subcellular location is the nucleolus. It carries out the reaction ATP + H2O = ADP + phosphate + H(+). ATP-dependent RNA helicase involved in 40S ribosomal subunit biogenesis. Required for the processing and cleavage of 35S pre-rRNA at sites A0, A1, and A2, leading to mature 18S rRNA. This Aspergillus niger (strain ATCC MYA-4892 / CBS 513.88 / FGSC A1513) protein is ATP-dependent RNA helicase rok1 (rok1).